The primary structure comprises 364 residues: tRNA 2-selenouridine synthase (364 aa).

The Rhodanese domain maps to 14–137 (LLADTPLIDV…LRQTAIQATW (124 aa)). Cysteine 97 functions as the S-selanylcysteine intermediate in the catalytic mechanism.

This sequence belongs to the SelU family. As to quaternary structure, monomer.

The enzyme catalyses 5-methylaminomethyl-2-thiouridine(34) in tRNA + selenophosphate + (2E)-geranyl diphosphate + H2O + H(+) = 5-methylaminomethyl-2-selenouridine(34) in tRNA + (2E)-thiogeraniol + phosphate + diphosphate. The catalysed reaction is 5-methylaminomethyl-2-thiouridine(34) in tRNA + (2E)-geranyl diphosphate = 5-methylaminomethyl-S-(2E)-geranyl-thiouridine(34) in tRNA + diphosphate. It catalyses the reaction 5-methylaminomethyl-S-(2E)-geranyl-thiouridine(34) in tRNA + selenophosphate + H(+) = 5-methylaminomethyl-2-(Se-phospho)selenouridine(34) in tRNA + (2E)-thiogeraniol. It carries out the reaction 5-methylaminomethyl-2-(Se-phospho)selenouridine(34) in tRNA + H2O = 5-methylaminomethyl-2-selenouridine(34) in tRNA + phosphate. Involved in the post-transcriptional modification of the uridine at the wobble position (U34) of tRNA(Lys), tRNA(Glu) and tRNA(Gln). Catalyzes the conversion of 2-thiouridine (S2U-RNA) to 2-selenouridine (Se2U-RNA). Acts in a two-step process involving geranylation of 2-thiouridine (S2U) to S-geranyl-2-thiouridine (geS2U) and subsequent selenation of the latter derivative to 2-selenouridine (Se2U) in the tRNA chain. This Salmonella agona (strain SL483) protein is tRNA 2-selenouridine synthase.